A 505-amino-acid chain; its full sequence is MNEEGCVPHNSDVVKQKSIDQRAPLSGEPKCVICSRYGEYICDETNDDVCSLECKQALLRRVDSARVFPATDECFYVRDPGSSSHDAQLLRRKLDIHVQGQGSAVPPPVLTFTSCGLPPKLLLNLETAGYDFPTPIQMQAIPAALTGKSLLASADTGSGKTASFLVPIISRCTTYHSEHPSDQRRNPLAMVLAPTRELCVQVEDQAKMLGKGLPFKTALVVGGDPMSGQLYRIQQGVELIIGTPGRVVDLLSKHTIELDNIMTFVLDEVDCMLQRGFRDQVMQIFQALSQPQVLLFSATISREVEKVGGSLAKEIILVSIGNPNKPNKAVNQLAIWVDAKQKKQKLFDILRSQNHFKPPAVVYVSSRVGADLLANAITVVTGVKALSIHGEKPMKERRDVMGSFLGGEVPVLVSTGVLGRGVDLLVVRQVIVFDMPSTIKEYIHVIGRASRMGEKGTAIVFVNEDDRNLFPDLVAALKSSGAAIPKELINLTSREMHNKKRRVGY.

Residues 27 to 56 form an HIT-type zinc finger; the sequence is GEPKCVICSRYGEYICDETNDDVCSLECKQ. The Q motif signature appears at 110-138; sequence LTFTSCGLPPKLLLNLETAGYDFPTPIQM. The Helicase ATP-binding domain maps to 141 to 318; that stretch reads IPAALTGKSL…GSLAKEIILV (178 aa). 154 to 161 provides a ligand contact to ATP; the sequence is ADTGSGKT. A DEAD box motif is present at residues 267 to 270; sequence DEVD. Residues 342–492 enclose the Helicase C-terminal domain; it reads KKQKLFDILR…AIPKELINLT (151 aa).

The protein belongs to the DEAD box helicase family. DDX59 subfamily.

The catalysed reaction is ATP + H2O = ADP + phosphate + H(+). The polypeptide is DEAD-box ATP-dependent RNA helicase 41 (RH41) (Arabidopsis thaliana (Mouse-ear cress)).